The primary structure comprises 350 residues: MSEMDKVQEKPSQTTKTEVQAKLPKVGVLLVNLGTPDGTSYGPMRRYLAEFLSDRRVIEWPRLIWYPILYGIVLNTRPKRSGKLYDRIWNREKNESPLRTYTRAQGEKLATALADYPNVVVDWAMRYGQPSIESVTDRLLQQGCERIVMFPLYPQYSATTTATVNDKFFEALMKKRFQPAVRIVPSYETEPVYIEALARSIEKHLETLSFKPEVVLASYHGIPKSYSDKGDPYRQQCLETSRLLQARLGLDDSQFRSTFQSRFGPEEWLQPYTDETVEELAKHGVKSMAVLNPGFVADCLETVDEIGNEAAEEFLENGGESFSHIPCLNDSEDGMKVIETLVRRELQGWV.

Residues H220 and E301 each contribute to the Fe cation site.

It belongs to the ferrochelatase family.

It is found in the cytoplasm. The catalysed reaction is heme b + 2 H(+) = protoporphyrin IX + Fe(2+). It functions in the pathway porphyrin-containing compound metabolism; protoheme biosynthesis; protoheme from protoporphyrin-IX: step 1/1. Its function is as follows. Catalyzes the ferrous insertion into protoporphyrin IX. This Brucella anthropi (strain ATCC 49188 / DSM 6882 / CCUG 24695 / JCM 21032 / LMG 3331 / NBRC 15819 / NCTC 12168 / Alc 37) (Ochrobactrum anthropi) protein is Ferrochelatase.